The following is a 480-amino-acid chain: Protein disulfide-isomerase 5-4 (480 aa).

Residues Asn-74 and Asn-99 are each glycosylated (N-linked (GlcNAc...) asparagine). The Thioredoxin domain maps to 120 to 263 (FHAGEVLSLI…LVKMVVSLVE (144 aa)). Residues Cys-170 and Cys-173 each act as nucleophile in the active site. An intrachain disulfide couples Cys-170 to Cys-173. N-linked (GlcNAc...) asparagine glycans are attached at residues Asn-280, Asn-326, and Asn-376. A helical transmembrane segment spans residues 439-459 (FSHFITNVCAIIGGVFTVAGI).

Belongs to the protein disulfide isomerase family. In terms of tissue distribution, widely expressed.

The protein resides in the membrane. Acts as a protein-folding catalyst that interacts with nascent polypeptides to catalyze the formation, isomerization, and reduction or oxidation of disulfide bonds. The polypeptide is Protein disulfide-isomerase 5-4 (PDIL5-4) (Arabidopsis thaliana (Mouse-ear cress)).